The sequence spans 492 residues: Aspartyl/glutamyl-tRNA(Asn/Gln) amidotransferase subunit B (492 aa).

Belongs to the GatB/GatE family. GatB subfamily. In terms of assembly, heterotrimer of A, B and C subunits.

The enzyme catalyses L-glutamyl-tRNA(Gln) + L-glutamine + ATP + H2O = L-glutaminyl-tRNA(Gln) + L-glutamate + ADP + phosphate + H(+). It catalyses the reaction L-aspartyl-tRNA(Asn) + L-glutamine + ATP + H2O = L-asparaginyl-tRNA(Asn) + L-glutamate + ADP + phosphate + 2 H(+). In terms of biological role, allows the formation of correctly charged Asn-tRNA(Asn) or Gln-tRNA(Gln) through the transamidation of misacylated Asp-tRNA(Asn) or Glu-tRNA(Gln) in organisms which lack either or both of asparaginyl-tRNA or glutaminyl-tRNA synthetases. The reaction takes place in the presence of glutamine and ATP through an activated phospho-Asp-tRNA(Asn) or phospho-Glu-tRNA(Gln). In Pelagibacter ubique (strain HTCC1062), this protein is Aspartyl/glutamyl-tRNA(Asn/Gln) amidotransferase subunit B.